The chain runs to 99 residues: Integration host factor subunit alpha (99 aa).

The protein belongs to the bacterial histone-like protein family. Heterodimer of an alpha and a beta chain.

In terms of biological role, this protein is one of the two subunits of integration host factor, a specific DNA-binding protein that functions in genetic recombination as well as in transcriptional and translational control. The protein is Integration host factor subunit alpha of Thioalkalivibrio sulfidiphilus (strain HL-EbGR7).